A 113-amino-acid chain; its full sequence is UPF0145 protein TK1926 (113 aa).

It belongs to the UPF0145 family.

The chain is UPF0145 protein TK1926 from Thermococcus kodakarensis (strain ATCC BAA-918 / JCM 12380 / KOD1) (Pyrococcus kodakaraensis (strain KOD1)).